The following is a 306-amino-acid chain: 4-hydroxy-3-methylbut-2-enyl diphosphate reductase (306 aa).

[4Fe-4S] cluster is bound at residue cysteine 12. 2 residues coordinate (2E)-4-hydroxy-3-methylbut-2-enyl diphosphate: histidine 41 and histidine 74. Residues histidine 41 and histidine 74 each coordinate dimethylallyl diphosphate. Isopentenyl diphosphate contacts are provided by histidine 41 and histidine 74. Residue cysteine 96 coordinates [4Fe-4S] cluster. Histidine 124 lines the (2E)-4-hydroxy-3-methylbut-2-enyl diphosphate pocket. Histidine 124 contacts dimethylallyl diphosphate. Histidine 124 provides a ligand contact to isopentenyl diphosphate. The active-site Proton donor is the glutamate 126. Threonine 164 contacts (2E)-4-hydroxy-3-methylbut-2-enyl diphosphate. Cysteine 194 contributes to the [4Fe-4S] cluster binding site. Residues serine 222, serine 223, asparagine 224, and serine 266 each contribute to the (2E)-4-hydroxy-3-methylbut-2-enyl diphosphate site. Residues serine 222, serine 223, asparagine 224, and serine 266 each coordinate dimethylallyl diphosphate. Isopentenyl diphosphate is bound by residues serine 222, serine 223, asparagine 224, and serine 266.

Belongs to the IspH family. It depends on [4Fe-4S] cluster as a cofactor.

The enzyme catalyses isopentenyl diphosphate + 2 oxidized [2Fe-2S]-[ferredoxin] + H2O = (2E)-4-hydroxy-3-methylbut-2-enyl diphosphate + 2 reduced [2Fe-2S]-[ferredoxin] + 2 H(+). The catalysed reaction is dimethylallyl diphosphate + 2 oxidized [2Fe-2S]-[ferredoxin] + H2O = (2E)-4-hydroxy-3-methylbut-2-enyl diphosphate + 2 reduced [2Fe-2S]-[ferredoxin] + 2 H(+). Its pathway is isoprenoid biosynthesis; dimethylallyl diphosphate biosynthesis; dimethylallyl diphosphate from (2E)-4-hydroxy-3-methylbutenyl diphosphate: step 1/1. It functions in the pathway isoprenoid biosynthesis; isopentenyl diphosphate biosynthesis via DXP pathway; isopentenyl diphosphate from 1-deoxy-D-xylulose 5-phosphate: step 6/6. Catalyzes the conversion of 1-hydroxy-2-methyl-2-(E)-butenyl 4-diphosphate (HMBPP) into a mixture of isopentenyl diphosphate (IPP) and dimethylallyl diphosphate (DMAPP). Acts in the terminal step of the DOXP/MEP pathway for isoprenoid precursor biosynthesis. The polypeptide is 4-hydroxy-3-methylbut-2-enyl diphosphate reductase (Dechloromonas aromatica (strain RCB)).